A 102-amino-acid polypeptide reads, in one-letter code: Large ribosomal subunit protein bL21 (102 aa).

This sequence belongs to the bacterial ribosomal protein bL21 family. As to quaternary structure, part of the 50S ribosomal subunit. Contacts protein L20.

Its function is as follows. This protein binds to 23S rRNA in the presence of protein L20. The protein is Large ribosomal subunit protein bL21 of Phytoplasma mali (strain AT).